A 242-amino-acid chain; its full sequence is Large ribosomal subunit protein uL1 (242 aa).

Belongs to the universal ribosomal protein uL1 family. As to quaternary structure, part of the 50S ribosomal subunit.

In terms of biological role, binds directly to 23S rRNA. The L1 stalk is quite mobile in the ribosome, and is involved in E site tRNA release. Its function is as follows. Protein L1 is also a translational repressor protein, it controls the translation of the L11 operon by binding to its mRNA. This Wigglesworthia glossinidia brevipalpis protein is Large ribosomal subunit protein uL1.